The primary structure comprises 185 residues: Ribosome-recycling factor (185 aa).

This sequence belongs to the RRF family.

Its subcellular location is the cytoplasm. In terms of biological role, responsible for the release of ribosomes from messenger RNA at the termination of protein biosynthesis. May increase the efficiency of translation by recycling ribosomes from one round of translation to another. This chain is Ribosome-recycling factor, found in Wolbachia sp. subsp. Brugia malayi (strain TRS).